We begin with the raw amino-acid sequence, 193 residues long: Probable GTP-binding protein EngB (193 aa).

One can recognise an EngB-type G domain in the interval 22–193; that stretch reads QLPEFALAGR…EAWGALQKWM (172 aa). Residues 30 to 37, 57 to 61, 75 to 78, 142 to 145, and 174 to 176 each bind GTP; these read GRSNVGKS, GKTQT, DVPG, TKAD, and FSA. Mg(2+) is bound by residues S37 and T59.

The protein belongs to the TRAFAC class TrmE-Era-EngA-EngB-Septin-like GTPase superfamily. EngB GTPase family. Requires Mg(2+) as cofactor.

Its function is as follows. Necessary for normal cell division and for the maintenance of normal septation. The sequence is that of Probable GTP-binding protein EngB from Anoxybacillus flavithermus (strain DSM 21510 / WK1).